A 395-amino-acid polypeptide reads, in one-letter code: Phosphoglycerate kinase (395 aa).

Residues 21–23, R36, 59–62, R113, and R146 contribute to the substrate site; these read DLN and HLGR. ATP contacts are provided by residues K197, E324, and 350–353; that span reads GGDT.

It belongs to the phosphoglycerate kinase family. In terms of assembly, monomer.

Its subcellular location is the cytoplasm. The enzyme catalyses (2R)-3-phosphoglycerate + ATP = (2R)-3-phospho-glyceroyl phosphate + ADP. It functions in the pathway carbohydrate degradation; glycolysis; pyruvate from D-glyceraldehyde 3-phosphate: step 2/5. In Acinetobacter baumannii (strain ACICU), this protein is Phosphoglycerate kinase.